The chain runs to 25 residues: Defensin D3 (25 aa).

It belongs to the DEFL family. Group IV subfamily. In terms of tissue distribution, distributed in the epidermal cell layer of leaves and in the subepidermal layer region of stems. Not in roots.

Its subcellular location is the secreted. It localises to the cell wall. Its function is as follows. Antimicrobial peptide. Active against Fusarium spp., Gram-positive and Gram-negative bacterial pathogens. This Spinacia oleracea (Spinach) protein is Defensin D3.